We begin with the raw amino-acid sequence, 194 residues long: NADH-quinone oxidoreductase subunit B (194 aa).

The [4Fe-4S] cluster site is built by Cys-73, Cys-74, Cys-138, and Cys-168.

This sequence belongs to the complex I 20 kDa subunit family. As to quaternary structure, NDH-1 is composed of 14 different subunits. Subunits NuoB, C, D, E, F, and G constitute the peripheral sector of the complex. [4Fe-4S] cluster is required as a cofactor.

The protein resides in the cell inner membrane. The catalysed reaction is a quinone + NADH + 5 H(+)(in) = a quinol + NAD(+) + 4 H(+)(out). NDH-1 shuttles electrons from NADH, via FMN and iron-sulfur (Fe-S) centers, to quinones in the respiratory chain. The immediate electron acceptor for the enzyme in this species is believed to be ubiquinone. Couples the redox reaction to proton translocation (for every two electrons transferred, four hydrogen ions are translocated across the cytoplasmic membrane), and thus conserves the redox energy in a proton gradient. In Rhizobium leguminosarum bv. trifolii (strain WSM2304), this protein is NADH-quinone oxidoreductase subunit B.